The primary structure comprises 431 residues: 23S rRNA (uracil(1939)-C(5))-methyltransferase RlmD (431 aa).

The region spanning 10–68 is the TRAM domain; sequence RVTTRQIITVKVNDLDSFGQGVARHNGKALFIPGLLPEESAEVIITEDKKQFARARVSR. The [4Fe-4S] cluster site is built by C81, C87, C90, and C161. 6 residues coordinate S-adenosyl-L-methionine: Q264, F293, N298, E314, N341, and D362. C388 (nucleophile) is an active-site residue.

It belongs to the class I-like SAM-binding methyltransferase superfamily. RNA M5U methyltransferase family. RlmD subfamily.

The enzyme catalyses uridine(1939) in 23S rRNA + S-adenosyl-L-methionine = 5-methyluridine(1939) in 23S rRNA + S-adenosyl-L-homocysteine + H(+). Functionally, catalyzes the formation of 5-methyl-uridine at position 1939 (m5U1939) in 23S rRNA. This Salmonella typhimurium (strain LT2 / SGSC1412 / ATCC 700720) protein is 23S rRNA (uracil(1939)-C(5))-methyltransferase RlmD.